We begin with the raw amino-acid sequence, 1280 residues long: Pullulanase A (1280 aa).

The first 44 residues, M1–S44, serve as a signal peptide directing secretion. The tract at residues I42–P132 is disordered. Over residues T48–T61 the composition is skewed to low complexity. The span at D79–L90 shows a compositional bias: polar residues. Residues E115–E126 are compositionally biased toward low complexity. Substrate-binding positions include W156–W158, W168, D214, W263–W265, W276, K318, and N323. Positions 661 and 663 each coordinate Ca(2+). Substrate-binding positions include Y667 to D668 and F743. D778 functions as the Nucleophile in the catalytic mechanism. Residue E807 is the Proton donor of the active site. W809 lines the substrate pocket. The Ca(2+) site is built by M828, T831, and D832. D839, R842, and Y849 together coordinate substrate. D882 and D886 together coordinate Ca(2+). Substrate contacts are provided by residues N896, K969, and D989–Y991. Ca(2+) is bound at residue D992. The interval V1140–N1248 is disordered. Positions S1149 to N1196 are enriched in basic and acidic residues. Residues S1205–S1218 show a composition bias toward low complexity. The short motif at L1246–G1250 is the LPXTG sorting signal element. A Pentaglycyl murein peptidoglycan amidated threonine modification is found at T1249. A propeptide spans G1250 to N1280 (removed by sortase).

It belongs to the glycosyl hydrolase 13 family.

The protein resides in the secreted. The protein localises to the cell wall. It is found in the cell surface. It carries out the reaction Hydrolysis of (1-&gt;6)-alpha-D-glucosidic linkages in pullulan, amylopectin and glycogen, and in the alpha- and beta-limit dextrins of amylopectin and glycogen.. Its activity is regulated as follows. Inhibited by 4-O-alpha-D-glucopyranosylmoranoline (G1M). Virulence factor. Involved in the degradation of glycogen of the mammalian host cells. Hydrolyzes the alpha-1,6-branchpoints of glycogen. Hydrolyzes pullulan. Does not hydrolyze dextran. Binds to mouse lung alveolar type II cells that are rich in glycogen stores. Is an alpha-glucan-specific carbohydrate-binding protein, which binds to amylose (pure alpha-(1,4)-linked glucose), amylopectin (alpha-(1,4)-linked glucose with alpha-(1,6) branch points), pullulan (linear polymer of mixed alpha-(1,4)- and alpha-(1,6)-linked glucose) and glycogen (similar to amylopectin with more frequent alpha-(1,6) branch points) in vitro. Does not bind to dextran (a linear polymer of alpha-(1,6)-linked glucose). The sequence is that of Pullulanase A from Streptococcus pneumoniae serotype 4 (strain ATCC BAA-334 / TIGR4).